The sequence spans 515 residues: Anthranilate synthase component 1 (515 aa).

L-tryptophan contacts are provided by residues serine 50 and 281-283 (PYM). 316-317 (GT) provides a ligand contact to chorismate. Glutamate 343 is a Mg(2+) binding site. Residues tyrosine 431, arginine 451, 465 to 467 (GAG), and glycine 467 each bind chorismate. Glutamate 480 is a Mg(2+) binding site.

It belongs to the anthranilate synthase component I family. Heterotetramer consisting of two non-identical subunits: a beta subunit (TrpG) and a large alpha subunit (TrpE). Mg(2+) is required as a cofactor.

The catalysed reaction is chorismate + L-glutamine = anthranilate + pyruvate + L-glutamate + H(+). Its pathway is amino-acid biosynthesis; L-tryptophan biosynthesis; L-tryptophan from chorismate: step 1/5. With respect to regulation, feedback inhibited by tryptophan. In terms of biological role, part of a heterotetrameric complex that catalyzes the two-step biosynthesis of anthranilate, an intermediate in the biosynthesis of L-tryptophan. In the first step, the glutamine-binding beta subunit (TrpG) of anthranilate synthase (AS) provides the glutamine amidotransferase activity which generates ammonia as a substrate that, along with chorismate, is used in the second step, catalyzed by the large alpha subunit of AS (TrpE) to produce anthranilate. In the absence of TrpG, TrpE can synthesize anthranilate directly from chorismate and high concentrations of ammonia. The chain is Anthranilate synthase component 1 (trpE) from Bacillus subtilis (strain 168).